The sequence spans 110 residues: UPF0122 protein lwe1821 (110 aa).

The protein belongs to the UPF0122 family.

Might take part in the signal recognition particle (SRP) pathway. This is inferred from the conservation of its genetic proximity to ftsY/ffh. May be a regulatory protein. The polypeptide is UPF0122 protein lwe1821 (Listeria welshimeri serovar 6b (strain ATCC 35897 / DSM 20650 / CCUG 15529 / CIP 8149 / NCTC 11857 / SLCC 5334 / V8)).